A 666-amino-acid chain; its full sequence is DNA-directed RNA polymerase subunit beta' (666 aa).

The Zn(2+) site is built by Cys69, Cys71, Cys87, and Cys90. 3 residues coordinate Mg(2+): Asp489, Asp491, and Asp493.

It belongs to the RNA polymerase beta' chain family. RpoC1 subfamily. As to quaternary structure, in plastids the minimal PEP RNA polymerase catalytic core is composed of four subunits: alpha, beta, beta', and beta''. When a (nuclear-encoded) sigma factor is associated with the core the holoenzyme is formed, which can initiate transcription. Mg(2+) is required as a cofactor. Zn(2+) serves as cofactor.

It localises to the plastid. The protein resides in the chloroplast. It catalyses the reaction RNA(n) + a ribonucleoside 5'-triphosphate = RNA(n+1) + diphosphate. In terms of biological role, DNA-dependent RNA polymerase catalyzes the transcription of DNA into RNA using the four ribonucleoside triphosphates as substrates. This Chara vulgaris (Common stonewort) protein is DNA-directed RNA polymerase subunit beta'.